A 399-amino-acid chain; its full sequence is MKKTIVLAYSGGLDTSAIIPWIKDNYNFDVVAFVADIGQSKKDLYKIKEKAIISGASDCYISDLKDIFVKKYVFPMLKTGAIYEGEYLLGTAIARPLIAKAQVDYAKKINAIGLCHGSTGKGNDQVRFELAYSALAPSLLVIAPWREWKFQSREDLLKYLKTKNIVTNVNKKKIYSRDENIFHVSTEGGILEDPWNPANEDCWFWTKSPLNAPNKPKKISLKIEKGCVVSINNKFFNEFNCLKRLNKIGAKHSIGRIDIVENRLIGMKSRGCYETPGGTIIYKALRSLEQLVFDRECMYWKNKIALQLSSIIYDGKWFTPIRKSLQKSSDILSSSISGKVVVELYKGSVRILQKKSLNSLYSKKYVTFGKDNVYNQIDAKGFIRLFSLSSRIRALKNKK.

ATP is bound by residues 8-16 (AYSGGLDTS) and Ala35. Residue Tyr87 participates in L-citrulline binding. Residue Gly117 participates in ATP binding. L-aspartate contacts are provided by Thr119, Asn123, and Asp124. Asn123 is an L-citrulline binding site. L-citrulline contacts are provided by Arg127, Ser176, Ser185, Glu261, and Tyr273.

Belongs to the argininosuccinate synthase family. Type 1 subfamily. As to quaternary structure, homotetramer.

Its subcellular location is the cytoplasm. It carries out the reaction L-citrulline + L-aspartate + ATP = 2-(N(omega)-L-arginino)succinate + AMP + diphosphate + H(+). The protein operates within amino-acid biosynthesis; L-arginine biosynthesis; L-arginine from L-ornithine and carbamoyl phosphate: step 2/3. The sequence is that of Argininosuccinate synthase from Buchnera aphidicola subsp. Cinara cedri (strain Cc).